Reading from the N-terminus, the 200-residue chain is Probable molybdenum cofactor guanylyltransferase (200 aa).

GTP contacts are provided by residues 9–11 (LAG), lysine 21, aspartate 69, and aspartate 100. Aspartate 100 provides a ligand contact to Mg(2+).

The protein belongs to the MobA family. Mg(2+) serves as cofactor.

The protein localises to the cytoplasm. It carries out the reaction Mo-molybdopterin + GTP + H(+) = Mo-molybdopterin guanine dinucleotide + diphosphate. Functionally, transfers a GMP moiety from GTP to Mo-molybdopterin (Mo-MPT) cofactor (Moco or molybdenum cofactor) to form Mo-molybdopterin guanine dinucleotide (Mo-MGD) cofactor. In Bacillus cereus (strain AH187), this protein is Probable molybdenum cofactor guanylyltransferase.